Here is a 307-residue protein sequence, read N- to C-terminus: GTPase Era (307 aa).

An Era-type G domain is found at 17 to 186; sequence RCGFVAIVGR…LELLKPYLPE (170 aa). The tract at residues 25-32 is G1; sequence GRPNVGKS. 25–32 serves as a coordination point for GTP; sequence GRPNVGKS. The G2 stretch occupies residues 51–55; sequence QTTRN. The G3 stretch occupies residues 72–75; that stretch reads DTPG. Residues 72-76 and 133-136 contribute to the GTP site; these read DTPGF and NKID. Residues 133 to 136 form a G4 region; it reads NKID. A G5 region spans residues 165-167; that stretch reads VSA. Residues 217-293 form the KH type-2 domain; the sequence is LGEELPYAMN…FLKVWVKVKS (77 aa).

This sequence belongs to the TRAFAC class TrmE-Era-EngA-EngB-Septin-like GTPase superfamily. Era GTPase family. In terms of assembly, monomer.

It is found in the cytoplasm. Its subcellular location is the cell inner membrane. An essential GTPase that binds both GDP and GTP, with rapid nucleotide exchange. Plays a role in 16S rRNA processing and 30S ribosomal subunit biogenesis and possibly also in cell cycle regulation and energy metabolism. This is GTPase Era from Neisseria meningitidis serogroup C / serotype 2a (strain ATCC 700532 / DSM 15464 / FAM18).